Reading from the N-terminus, the 589-residue chain is Transcription factor 4 (589 aa).

Disordered stretches follow at residues 1 to 124 (MTSR…SSSK), 138 to 163 (DGHH…MLGN), 184 to 239 (PSHS…SQTG), 254 to 297 (HTNN…EGPL), 384 to 492 (SLLP…MANN), and 556 to 589 (KRRE…MGQM). Residues Ser8 and Ser13 each carry the phosphoserine modification. Positions 56-74 (GTLSPTKPGSQYYPYSSNN) are enriched in polar residues. The segment at 136 to 157 (MQDGHHSSDPWSSSSGMNQPGY) is leucine-zipper. The span at 184–224 (PSHSSADINSSLPPMSTFHRSGTNHYSTSSCTPPANGTDSI) shows a compositional bias: polar residues. Low complexity predominate over residues 255–266 (TNNSFSSNPSTP). Over residues 283-292 (NGGQASSSPN) the composition is skewed to polar residues. Residue Ser290 is modified to Phosphoserine. The segment at 380–403 (RGSHSLLPNQVPVPQLPVQSATSP) is class A specific domain. 2 stretches are compositionally biased toward low complexity: residues 385 to 398 (LLPN…LPVQ) and 421 to 430 (GQSVSSGSSE). Phosphoserine is present on Ser433. Basic and acidic residues-rich tracts occupy residues 445-461 (KSSE…DIKS) and 477-492 (PEQK…MANN). The region spanning 486 to 539 (ERRMANNARERLRVRDINEAFKELGRMVQLHLKSDKPQTKLLILHQAVAVILSL) is the bHLH domain.

In terms of assembly, efficient DNA binding requires dimerization with another bHLH protein. Forms homo- or heterooligomers with myogenin. Interacts with HIVEP2. Interacts with NEUROD2. Interacts with AGBL1.

The protein localises to the nucleus. Transcription factor that binds to the immunoglobulin enhancer Mu-E5/KE5-motif. Involved in the initiation of neuronal differentiation. Activates transcription by binding to the E box (5'-CANNTG-3'). Binds to the E-box present in the somatostatin receptor 2 initiator element (SSTR2-INR) to activate transcription. Interacts with the CCAAT displacement protein (CDP2) to bind the tyrosine hydroxylase enhancer. In Rattus norvegicus (Rat), this protein is Transcription factor 4 (Tcf4).